Consider the following 214-residue polypeptide: Adenylate kinase (214 aa).

10–15 (GAGKGT) is an ATP binding site. Residues 30 to 59 (STGDMLRAAVKAQSELGRQAKALMDAGKLV) form an NMP region. AMP-binding positions include threonine 31, arginine 36, 57-59 (KLV), 85-88 (GFPR), and glutamine 92. The LID stretch occupies residues 122-159 (GRRVHAPSGRVYHVKFNPPKQEGKDDVTGELLTSRKDD). Residues arginine 123 and 132 to 133 (VY) each bind ATP. AMP contacts are provided by arginine 156 and arginine 167. ATP is bound at residue arginine 200.

The protein belongs to the adenylate kinase family. As to quaternary structure, monomer.

The protein resides in the cytoplasm. The catalysed reaction is AMP + ATP = 2 ADP. It functions in the pathway purine metabolism; AMP biosynthesis via salvage pathway; AMP from ADP: step 1/1. In terms of biological role, catalyzes the reversible transfer of the terminal phosphate group between ATP and AMP. Plays an important role in cellular energy homeostasis and in adenine nucleotide metabolism. This is Adenylate kinase from Sodalis glossinidius (strain morsitans).